Here is a 483-residue protein sequence, read N- to C-terminus: Regulatory protein ViaA (483 aa).

This sequence belongs to the ViaA family. In terms of assembly, homodimer. Interacts with RavA.

It localises to the cytoplasm. Functionally, component of the RavA-ViaA chaperone complex, which may act on the membrane to optimize the function of some of the respiratory chains. ViaA stimulates the ATPase activity of RavA. This Salmonella paratyphi A (strain ATCC 9150 / SARB42) protein is Regulatory protein ViaA.